We begin with the raw amino-acid sequence, 192 residues long: Signal peptidase complex catalytic subunit SEC11C (192 aa).

The Cytoplasmic portion of the chain corresponds to 1 to 28 (MVRAGAVGTHLPTSSLDIFGDLRKMNKR). The helical; Signal-anchor for type II membrane protein transmembrane segment at 29–48 (QLYYQVLNFAMIVSSALMIW) threads the bilayer. Residues 49 to 192 (KGLIVLTGSE…GAYVLLKRES (144 aa)) are Lumenal-facing. Active-site charge relay system residues include Ser-68, His-108, and Asp-134. Residues 177 to 188 (ALLAVMGAYVLL) form a C-terminal short (CTS) helix region.

This sequence belongs to the peptidase S26B family. As to quaternary structure, component of the signal peptidase complex paralog C (SPC-C) composed of a catalytic subunit SEC11C and three accessory subunits SPCS1, SPCS2 and SPCS3. Within the complex, interacts with SPCS2 and SPCS3. The complex induces a local thinning of the ER membrane which is used to measure the length of the signal peptide (SP) h-region of protein substrates. This ensures the selectivity of the complex towards h-regions shorter than 18-20 amino acids. Post-translationally, may undergo processing at the N-terminus.

It is found in the endoplasmic reticulum membrane. It carries out the reaction Cleavage of hydrophobic, N-terminal signal or leader sequences from secreted and periplasmic proteins.. In terms of biological role, catalytic component of the signal peptidase complex (SPC) which catalyzes the cleavage of N-terminal signal sequences from nascent proteins as they are translocated into the lumen of the endoplasmic reticulum. Specifically cleaves N-terminal signal peptides that contain a hydrophobic alpha-helix (h-region) shorter than 18-20 amino acids. This chain is Signal peptidase complex catalytic subunit SEC11C (Sec11c), found in Mus musculus (Mouse).